The sequence spans 720 residues: Heat shock protein homolog pss1 (720 aa).

A Phosphoserine modification is found at Ser-38. A Phosphothreonine modification is found at Thr-39. Residues 658-690 (KRQKVQAEREAAKAATKSEAEKQKPSGKFEEGT) are compositionally biased toward basic and acidic residues. The disordered stretch occupies residues 658–720 (KRQKVQAERE…ETMEIDEQKE (63 aa)). Acidic residues predominate over residues 703–720 (VAPENEEVETMEIDEQKE).

It belongs to the heat shock protein 70 family.

Its subcellular location is the cytoplasm. Its function is as follows. Required for normal growth at various temperatures. The chain is Heat shock protein homolog pss1 (pss1) from Schizosaccharomyces pombe (strain 972 / ATCC 24843) (Fission yeast).